The primary structure comprises 843 residues: Glycogen phosphorylase, muscle form (843 aa).

An N-acetylserine modification is found at serine 2. Residue serine 15 is modified to Phosphoserine; by PHK; in form phosphorylase A. Residues aspartate 43 and tyrosine 76 each contribute to the AMP site. Tyrosine 204 and tyrosine 227 each carry phosphotyrosine. 310–319 contributes to the AMP binding site; the sequence is RRFKSSKFGC. The residue at position 430 (serine 430) is a Phosphoserine. Residue tyrosine 473 is modified to Phosphotyrosine. Serine 514 bears the Phosphoserine mark. Lysine 681 is subject to N6-(pyridoxal phosphate)lysine. 2 positions are modified to phosphoserine: serine 747 and serine 748.

Belongs to the glycogen phosphorylase family. In terms of assembly, homodimer. Homotetramer; to form the enzymatically active phosphorylase A. The cofactor is pyridoxal 5'-phosphate. Phosphorylation of Ser-15 converts phosphorylase B (unphosphorylated) to phosphorylase A.

It carries out the reaction [(1-&gt;4)-alpha-D-glucosyl](n) + phosphate = [(1-&gt;4)-alpha-D-glucosyl](n-1) + alpha-D-glucose 1-phosphate. Allosterically regulated through the non-covalent binding of metabolites, being activated by AMP and inhibited by ATP, ADP, and glucose-6-phosphate. The activity is also controlled by post-translational modifications including phosphorylation. Its function is as follows. Allosteric enzyme that catalyzes the rate-limiting step in glycogen catabolism, the phosphorolytic cleavage of glycogen to produce glucose-1-phosphate, and plays a central role in maintaining cellular and organismal glucose homeostasis. The chain is Glycogen phosphorylase, muscle form from Oryctolagus cuniculus (Rabbit).